Reading from the N-terminus, the 287-residue chain is MATEEPVIVNEVVEEQAAPETVKDEANPPAKSGKAKKETKAKKPAAPRKRSATPTHPPYFEMIKDAIVTLKERTGSSQHAITKFIEEKQKSLPSNFKKLLLTQLKKFVASEKLVKVKNSYKLPSGSKPAAAAVPAKKKPAAAKSKPAAKPKAAVKPKAKPAAKAKPAAKAKPAAKAKPAAKAKPAAKAKPAAKAKPVAKAKPKAAAAAKPKAAVKPKAAPAKTKAAVKPNLKAKTTTAKVAKTATRTTPSRKAAPKATPAKKEPVKKAPAKNVKSPAKKATPKRGRK.

Residues 1-11 (MATEEPVIVNE) are compositionally biased toward low complexity. Disordered stretches follow at residues 1 to 58 (MATE…THPP) and 120 to 287 (YKLP…RGRK). Residues 33–51 (GKAKKETKAKKPAAPRKRS) show a composition bias toward basic residues. The region spanning 55-124 (THPPYFEMIK…KVKNSYKLPS (70 aa)) is the H15 domain. Over residues 135–202 (AKKKPAAAKS…KAKPVAKAKP (68 aa)) the composition is skewed to basic residues. Positions 203–248 (KAAAAAKPKAAVKPKAAPAKTKAAVKPNLKAKTTTAKVAKTATRTT) are enriched in low complexity. The span at 276–287 (PAKKATPKRGRK) shows a compositional bias: basic residues.

This sequence belongs to the histone H1/H5 family.

The protein resides in the nucleus. It localises to the chromosome. In terms of biological role, histones H1 are necessary for the condensation of nucleosome chains into higher-order structures. The polypeptide is Histone H1 (Solanum lycopersicum (Tomato)).